We begin with the raw amino-acid sequence, 137 residues long: MTSPPTFGLSKSERLYLRDEINTVFGEGKAFVVYPLRVVYRLGSEHRVAYSSMLVSVAKKRFRRAVKRNRVKRLVREAYRLNKHLLNDVLQERQIYATIAFMVVSDELPDFRTVERAMQKSLIRIAGNVPSSALKNE.

This sequence belongs to the RnpA family. Consists of a catalytic RNA component (M1 or rnpB) and a protein subunit.

The catalysed reaction is Endonucleolytic cleavage of RNA, removing 5'-extranucleotides from tRNA precursor.. Functionally, RNaseP catalyzes the removal of the 5'-leader sequence from pre-tRNA to produce the mature 5'-terminus. It can also cleave other RNA substrates such as 4.5S RNA. The protein component plays an auxiliary but essential role in vivo by binding to the 5'-leader sequence and broadening the substrate specificity of the ribozyme. The sequence is that of Ribonuclease P protein component from Porphyromonas gingivalis (strain ATCC BAA-308 / W83).